Reading from the N-terminus, the 119-residue chain is Protein phosphatase EYA1 (119 aa).

This sequence belongs to the HAD-like hydrolase superfamily. EYA family. Requires Mg(2+) as cofactor.

The protein localises to the cytoplasm. Its subcellular location is the nucleus. It carries out the reaction O-phospho-L-tyrosyl-[protein] + H2O = L-tyrosyl-[protein] + phosphate. It catalyses the reaction O-phospho-L-seryl-[protein] + H2O = L-seryl-[protein] + phosphate. The catalysed reaction is O-phospho-L-threonyl-[protein] + H2O = L-threonyl-[protein] + phosphate. Its function is as follows. Functions both as protein phosphatase and as transcriptional coactivator for SIX1, and probably also for other transcription factors of this family. Tyrosine phosphatase that dephosphorylates 'Tyr-142' of histone H2AX (H2AXY142ph) and promotes efficient DNA repair via the recruitment of DNA repair complexes containing MDC1. 'Tyr-142' phosphorylation of histone H2AX plays a central role in DNA repair and acts as a mark that distinguishes between apoptotic and repair responses to genotoxic stress. Its function as histone phosphatase may contribute to its function in transcription regulation during organogenesis. Also has phosphatase activity with proteins phosphorylated on Ser and Thr residues (in vitro). Required for normal embryonic development of the skeleton, kidneys and ears. This chain is Protein phosphatase EYA1 (EYA1), found in Gallus gallus (Chicken).